A 314-amino-acid polypeptide reads, in one-letter code: DNA-directed RNA polymerase subunit alpha (314 aa).

The segment at 1–228 (MIEFEKPNIH…EHLGLFMDIS (228 aa)) is alpha N-terminal domain (alpha-NTD). The interval 242-314 (PVAASASDSA…DMNLGFRKED (73 aa)) is alpha C-terminal domain (alpha-CTD).

This sequence belongs to the RNA polymerase alpha chain family. Homodimer. The RNAP catalytic core consists of 2 alpha, 1 beta, 1 beta' and 1 omega subunit. When a sigma factor is associated with the core the holoenzyme is formed, which can initiate transcription.

It carries out the reaction RNA(n) + a ribonucleoside 5'-triphosphate = RNA(n+1) + diphosphate. Functionally, DNA-dependent RNA polymerase catalyzes the transcription of DNA into RNA using the four ribonucleoside triphosphates as substrates. The protein is DNA-directed RNA polymerase subunit alpha of Leuconostoc mesenteroides subsp. mesenteroides (strain ATCC 8293 / DSM 20343 / BCRC 11652 / CCM 1803 / JCM 6124 / NCDO 523 / NBRC 100496 / NCIMB 8023 / NCTC 12954 / NRRL B-1118 / 37Y).